We begin with the raw amino-acid sequence, 472 residues long: Adenylyl cyclase-associated protein 1 (472 aa).

An N-acetylalanine modification is found at alanine 2. Position 31 is a phosphotyrosine (tyrosine 31). Phosphoserine is present on serine 34. Lysine 81 is subject to N6-acetyllysine. The segment at 216-253 is disordered; sequence ELSGLPSGPSAGSGPPPPPPGPPPPPVPTSSGSDDSAS. Positions 218 to 228 are enriched in low complexity; the sequence is SGLPSGPSAGS. The segment covering 229-243 has biased composition (pro residues); sequence GPPPPPPGPPPPPVP. Residues 244–253 show a composition bias toward low complexity; it reads TSSGSDDSAS. The residue at position 287 (lysine 287) is an N6-methyllysine. Phosphoserine is present on residues serine 290, serine 295, and serine 301. Positions 290-312 are disordered; the sequence is SGLIRSGPKPFSASKPDPPKPVA. The C-CAP/cofactor C-like domain maps to 307-450; that stretch reads PPKPVAKKEP…EGGDFNEFPV (144 aa). Lysine 345 participates in a covalent cross-link: Glycyl lysine isopeptide (Lys-Gly) (interchain with G-Cter in SUMO1).

Belongs to the CAP family. As to quaternary structure, homodimer. Binds actin monomers.

The protein localises to the cell membrane. In terms of biological role, directly regulates filament dynamics and has been implicated in a number of complex developmental and morphological processes, including mRNA localization and the establishment of cell polarity. This chain is Adenylyl cyclase-associated protein 1 (CAP1), found in Bos taurus (Bovine).